The sequence spans 467 residues: Multiple inositol polyphosphate phosphatase 1 (467 aa).

The first 15 residues, 1 to 15, serve as a signal peptide directing secretion; sequence MRLLILLLLPLVAIA. H67 is a catalytic residue. N-linked (GlcNAc...) asparagine glycans are attached at residues N120, N159, and N234. G441 carries GPI-anchor amidated glycine lipidation. Positions 442-467 are cleaved as a propeptide — removed in mature form; it reads GAPSLGSGVGGLLATTLAAMLVYLMH.

Belongs to the histidine acid phosphatase family. MINPP1 subfamily. Post-translationally, N-glycosylated.

Its subcellular location is the cell membrane. The protein localises to the apical cell membrane. It is found in the basolateral cell membrane. The protein resides in the cell projection. It localises to the filopodium. Its subcellular location is the cell junction. It carries out the reaction (2R)-2,3-bisphosphoglycerate + H2O = (2R)-2-phosphoglycerate + phosphate. It catalyses the reaction 1D-myo-inositol hexakisphosphate + H2O = 1D-myo-inositol 1,2,4,5,6-pentakisphosphate + phosphate. The catalysed reaction is 1D-myo-inositol 1,2,4,5,6-pentakisphosphate + H2O = 1D-myo-inositol 1,2,5,6-tetrakisphosphate + phosphate. The enzyme catalyses 1D-myo-inositol 1,2,5,6-tetrakisphosphate + H2O = 1D-myo-inositol 1,2,6-trisphosphate + phosphate. Probable multiple inositol polyphosphate phosphatase that hydrolyzes 1D-myo-inositol 1,3,4,5,6-pentakisphosphate (InsP5[2OH]) and 1D-myo-inositol hexakisphosphate (InsP6) to a range of less phosphorylated inositol phosphates. This regulates the availability of these various small molecule second messengers and metal chelators which control many aspects of cell physiology. May have a dual substrate specificity, and function as a 2,3-bisphosphoglycerate 3-phosphatase hydrolyzing 2,3-bisphosphoglycerate to 2-phosphoglycerate. 2,3-bisphosphoglycerate (BPG) is formed as part of the Rapoport-Luebering glycolytic bypass. Has a role in embryonic tracheal development where it localizes to the leading edge of actively migrating branches. In these leading cells, enhances formation and/or maintenance of filopodia which may drive branch migration and elongation by cell-cell intercalation. The function in tracheal morphogenesis is dependent on its inositol polyphosphate phosphatase activity. This Drosophila melanogaster (Fruit fly) protein is Multiple inositol polyphosphate phosphatase 1.